Here is a 22-residue protein sequence, read N- to C-terminus: FFGSIIGALAKGLPSLISLIKK.

Lysine 22 is modified (lysine amide).

In terms of tissue distribution, expressed by the skin glands.

It is found in the secreted. In terms of biological role, antimicrobial peptide. Active against Gram-negative bacterium E.coli (MIC=6 uM) and against Gram-positive bacterium S.aureus (MIC=12.5 uM). In Nidirana okinavana (Kampira Falls frog), this protein is Brevinin-1OKc.